A 1547-amino-acid polypeptide reads, in one-letter code: Tubby-related protein 4 (1547 aa).

WD repeat units follow at residues 80–119, 123–162, and 165–204; these read GHNSEVVLVRWNEPYQKLATCDADGGIFVWIQYEGRWSVE, DRGAQVSDFTWSHDGTQALISYRDGFVLVGSVSGQRHWSS, and NLESQITCGIWTPDDQQVLFGTADGQVIVMDCHGRMLAHV. The region spanning 364-414 is the SOCS box domain; that stretch reads ALYVVRVEHRVSSLQLLCQQAIASTLREDKDVNKLTLPPRLCSYLSTAFIP. A disordered region spans residues 530 to 580; the sequence is SPKISRSSKSPKLPRISIEARKSPKLPRAAQEISRSPRLPMRKPSMGSPSL. Over residues 533-546 the composition is skewed to low complexity; sequence ISRSSKSPKLPRIS. Position 577 is a phosphoserine (Ser577). Residues Arg949 and Arg954 each carry the asymmetric dimethylarginine modification. Phosphoserine is present on residues Ser1347 and Ser1378. The tract at residues 1374–1414 is disordered; that stretch reads SLISSPRLGREKKKVKSQKDQLKSKKLNKTNEFQDSSESEP. The tract at residues 1436 to 1547 is TUB; that stretch reads SKRSLRTASE…ALANVTQRLK (112 aa).

Belongs to the TUB family.

It localises to the cytoplasm. It participates in protein modification; protein ubiquitination. May be a substrate-recognition component of a SCF-like ECS (Elongin-Cullin-SOCS-box protein) E3 ubiquitin ligase complex which mediates the ubiquitination and subsequent proteasomal degradation of target proteins. This Mus musculus (Mouse) protein is Tubby-related protein 4 (Tulp4).